Consider the following 81-residue polypeptide: Photosystem I iron-sulfur center (81 aa).

2 consecutive 4Fe-4S ferredoxin-type domains span residues 2–31 and 39–68; these read SHTV…MVPW and VASS…IRVY. Positions 11, 14, 17, 21, 48, 51, 54, and 58 each coordinate [4Fe-4S] cluster.

In terms of assembly, the cyanobacterial PSI reaction center is composed of one copy each of PsaA,B,C,D,E,F,I,J,K,L,M and X, and forms trimeric complexes. [4Fe-4S] cluster serves as cofactor.

It is found in the cellular thylakoid membrane. The enzyme catalyses reduced [plastocyanin] + hnu + oxidized [2Fe-2S]-[ferredoxin] = oxidized [plastocyanin] + reduced [2Fe-2S]-[ferredoxin]. Its function is as follows. Apoprotein for the two 4Fe-4S centers FA and FB of photosystem I (PSI); essential for photochemical activity. FB is the terminal electron acceptor of PSI, donating electrons to ferredoxin. The C-terminus interacts with PsaA/B/D and helps assemble the protein into the PSI complex. Required for binding of PsaD and PsaE to PSI. PSI is a plastocyanin/cytochrome c6-ferredoxin oxidoreductase, converting photonic excitation into a charge separation, which transfers an electron from the donor P700 chlorophyll pair to the spectroscopically characterized acceptors A0, A1, FX, FA and FB in turn. The chain is Photosystem I iron-sulfur center from Trichormus variabilis (strain ATCC 29413 / PCC 7937) (Anabaena variabilis).